Here is a 313-residue protein sequence, read N- to C-terminus: Metaxin-3 (313 aa).

Residues Glu-280–Ala-313 form a disordered region.

The protein belongs to the metaxin family. As to quaternary structure, part of a large protein complex spanning both mitochondrial membranes termed the mitochondrial intermembrane space bridging (MIB) complex.

Its subcellular location is the mitochondrion. It is found in the mitochondrion outer membrane. Functionally, could function in transport of proteins into the mitochondrion. This chain is Metaxin-3 (mtx3), found in Danio rerio (Zebrafish).